The following is a 324-amino-acid chain: MQETSLTKAVSPRQSLGQILLNYYQLTKPRLIVLFLITTAAGMWVAARGEVDPVLALITLLTGAMAAGSANTINCLYDRDIDYIMERTRHRPLPSGRVQPWEALVFAIALAVGAFSLQTLCANLLSACLEMAGIAVYVGVYTHWLKRSSTQNIVIGGAAGAIPPLVGWAAVTGELSWAAWVLFAIIFIWTPPHFWPLAMLIQEDYAKVNVPMMPVVDGDRPTAWQIFGYTLVLLPTTLLLVYPLHACGLIYGAIALVLGVVFIRKAWELVQTPEDKDQARAVFKFSILYMMILCAAMGIDSLPLTHAVVSQVTANLQTLVGTIL.

A run of 9 helical transmembrane segments spans residues 31 to 51 (LIVL…RGEV), 53 to 73 (PVLA…ANTI), 104 to 124 (LVFA…CANL), 125 to 145 (LSAC…THWL), 153 to 173 (IVIG…AVTG), 181 to 201 (VLFA…AMLI), 222 to 242 (TAWQ…LLVY), 243 to 263 (PLHA…VVFI), and 285 to 305 (FSIL…LPLT).

Belongs to the UbiA prenyltransferase family. Protoheme IX farnesyltransferase subfamily.

It is found in the cell inner membrane. The catalysed reaction is heme b + (2E,6E)-farnesyl diphosphate + H2O = Fe(II)-heme o + diphosphate. Its pathway is porphyrin-containing compound metabolism; heme O biosynthesis; heme O from protoheme: step 1/1. In terms of biological role, converts heme B (protoheme IX) to heme O by substitution of the vinyl group on carbon 2 of heme B porphyrin ring with a hydroxyethyl farnesyl side group. This Cyanothece sp. (strain PCC 7425 / ATCC 29141) protein is Protoheme IX farnesyltransferase.